The sequence spans 157 residues: Phosphopantetheine adenylyltransferase (157 aa).

S8 contributes to the substrate binding site. ATP-binding positions include 8 to 9 and H16; that span reads SF. Substrate is bound by residues K40, L72, and R86. Residues 87 to 89, E97, and 121 to 127 contribute to the ATP site; these read GLR and FGTISSS.

This sequence belongs to the bacterial CoaD family. As to quaternary structure, homohexamer. Mg(2+) is required as a cofactor.

It localises to the cytoplasm. It carries out the reaction (R)-4'-phosphopantetheine + ATP + H(+) = 3'-dephospho-CoA + diphosphate. It functions in the pathway cofactor biosynthesis; coenzyme A biosynthesis; CoA from (R)-pantothenate: step 4/5. In terms of biological role, reversibly transfers an adenylyl group from ATP to 4'-phosphopantetheine, yielding dephospho-CoA (dPCoA) and pyrophosphate. In Cutibacterium acnes (strain DSM 16379 / KPA171202) (Propionibacterium acnes), this protein is Phosphopantetheine adenylyltransferase.